The sequence spans 209 residues: MIAIIDYGMGNIRSVEQALKYIGAAYIVTSDKEEIFRSDGVILPGVGAFPKAMDILEEKDLVRVLQEIGCSRKPLLGICLGMQLLFEKSEELQDCNGLSLLPGVIRKLKVPYKIPHMGWNELKKEGEIALWNGVEDSSFVYYVHSYYADCPNEIVYGISDYGVKVPGFVAKGNIYGAQFHPEKSGDIGMQMLKNFKGVVETWKSSQLSI.

Residues 1–205 (MIAIIDYGMG…KGVVETWKSS (205 aa)) form the Glutamine amidotransferase type-1 domain. The active-site Nucleophile is cysteine 79. Residues histidine 180 and glutamate 182 contribute to the active site.

As to quaternary structure, heterodimer of HisH and HisF.

The protein localises to the cytoplasm. It catalyses the reaction 5-[(5-phospho-1-deoxy-D-ribulos-1-ylimino)methylamino]-1-(5-phospho-beta-D-ribosyl)imidazole-4-carboxamide + L-glutamine = D-erythro-1-(imidazol-4-yl)glycerol 3-phosphate + 5-amino-1-(5-phospho-beta-D-ribosyl)imidazole-4-carboxamide + L-glutamate + H(+). It carries out the reaction L-glutamine + H2O = L-glutamate + NH4(+). Its pathway is amino-acid biosynthesis; L-histidine biosynthesis; L-histidine from 5-phospho-alpha-D-ribose 1-diphosphate: step 5/9. In terms of biological role, IGPS catalyzes the conversion of PRFAR and glutamine to IGP, AICAR and glutamate. The HisH subunit catalyzes the hydrolysis of glutamine to glutamate and ammonia as part of the synthesis of IGP and AICAR. The resulting ammonia molecule is channeled to the active site of HisF. This Bacillus thuringiensis subsp. konkukian (strain 97-27) protein is Imidazole glycerol phosphate synthase subunit HisH.